We begin with the raw amino-acid sequence, 721 residues long: Polyribonucleotide nucleotidyltransferase (721 aa).

Mg(2+)-binding residues include aspartate 495 and aspartate 501. The KH domain occupies 562-621; it reads PRLLSFRIDPELIGTVIGPGGRTIKGITERTNTKIDIEDSGIVTIASHDGAAADEAQKII. Residues 631 to 699 form the S1 motif domain; the sequence is GEVFSGAITR…NRGRINLTLR (69 aa). The tract at residues 700-721 is disordered; it reads GVPQNGEEAEPAPAPTPVAPLN. A compositionally biased stretch (pro residues) spans 711 to 721; sequence APAPTPVAPLN.

Belongs to the polyribonucleotide nucleotidyltransferase family. Mg(2+) serves as cofactor.

The protein localises to the cytoplasm. The enzyme catalyses RNA(n+1) + phosphate = RNA(n) + a ribonucleoside 5'-diphosphate. In terms of biological role, involved in mRNA degradation. Catalyzes the phosphorolysis of single-stranded polyribonucleotides processively in the 3'- to 5'-direction. The sequence is that of Polyribonucleotide nucleotidyltransferase from Synechococcus sp. (strain WH7803).